Reading from the N-terminus, the 315-residue chain is Pantothenate kinase (315 aa).

94–101 (GSVAVGKS) provides a ligand contact to ATP.

This sequence belongs to the prokaryotic pantothenate kinase family.

The protein resides in the cytoplasm. The enzyme catalyses (R)-pantothenate + ATP = (R)-4'-phosphopantothenate + ADP + H(+). The protein operates within cofactor biosynthesis; coenzyme A biosynthesis; CoA from (R)-pantothenate: step 1/5. This Shewanella amazonensis (strain ATCC BAA-1098 / SB2B) protein is Pantothenate kinase.